The sequence spans 257 residues: Glycerol-3-phosphate acyltransferase (257 aa).

Transmembrane regions (helical) follow at residues Ile7–Ser27, Ile66–Ile86, Ala104–Phe124, Ile140–Ile160, Met164–Ile184, and Tyr203–Ile223.

The protein belongs to the PlsY family. Probably interacts with PlsX.

Its subcellular location is the cell membrane. It carries out the reaction an acyl phosphate + sn-glycerol 3-phosphate = a 1-acyl-sn-glycero-3-phosphate + phosphate. It participates in lipid metabolism; phospholipid metabolism. Its function is as follows. Catalyzes the transfer of an acyl group from acyl-phosphate (acyl-PO(4)) to glycerol-3-phosphate (G3P) to form lysophosphatidic acid (LPA). This enzyme utilizes acyl-phosphate as fatty acyl donor, but not acyl-CoA or acyl-ACP. The chain is Glycerol-3-phosphate acyltransferase from Ureaplasma parvum serovar 3 (strain ATCC 700970).